The following is a 1304-amino-acid chain: Angiotensin-converting enzyme (1304 aa).

Residues 1–27 form the signal peptide; that stretch reads MGAASGRRGPGLLLPLLLLLPPQPALA. Over 28–1257 the chain is Extracellular; the sequence is LDPGLQPGNF…LDAQQARVGQ (1230 aa). 6 N-linked (GlcNAc...) asparagine glycosylation sites follow: Asn-36, Asn-52, Asn-72, Asn-109, Asn-144, and Asn-158. Peptidase M2 domains lie at 38–622 and 641–1220; these read SADE…LGWP and VTDE…LGWP. Cys-155 and Cys-163 are oxidised to a cystine. A chloride-binding site is contributed by Tyr-229. An N-linked (GlcNAc...) asparagine glycan is attached at Asn-316. Cysteines 357 and 375 form a disulfide. Position 388 (His-388) interacts with Zn(2+). Glu-389 serves as the catalytic Proton acceptor 1. Positions 392 and 416 each coordinate Zn(2+). 3 N-linked (GlcNAc...) asparagine glycosylation sites follow: Asn-440, Asn-443, and Asn-507. The active-site Proton donor 1 is the His-518. Arg-527 serves as a coordination point for chloride. A disulfide bond links Cys-543 and Cys-555. Asn-675 carries an N-linked (GlcNAc...) asparagine glycan. Asn-693 and Asn-712 each carry an N-linked (GlcNAc...) (complex) asparagine glycan. Residues Cys-755 and Cys-761 are joined by a disulfide bond. Residue Asn-758 is glycosylated (N-linked (GlcNAc...) asparagine). Arg-789 and Tyr-827 together coordinate chloride. Asn-940 is a glycosylation site (N-linked (GlcNAc...) asparagine). The cysteines at positions 955 and 973 are disulfide-linked. Zn(2+) is bound at residue His-986. Glu-987 serves as the catalytic Proton acceptor 2. Zn(2+)-binding residues include His-990 and Glu-1014. Chloride is bound by residues Trp-1088 and Arg-1092. His-1116 acts as the Proton donor 2 in catalysis. Arg-1125 contributes to the chloride binding site. Cys-1141 and Cys-1153 are oxidised to a cystine. Residue Asn-1189 is glycosylated (N-linked (GlcNAc...) asparagine). Positions 1213 to 1254 are juxtamembrane stalk; that stretch reads HGEKLGWPQYNWTPNSARSEGPLPDSGRVSFLGLDLDAQQAR. Residues 1258-1274 form a helical membrane-spanning segment; the sequence is WLLLFLGIALLVATLGL. Topologically, residues 1275 to 1304 are cytoplasmic; it reads SQRLFSIRHRSLHRHSHGPQFDSEVELRHS. Ser-1297 is modified (phosphoserine).

It belongs to the peptidase M2 family. Monomer and homodimer; homodimerizes following binding to an inhibitor. Interacts with calmodulin (CALM1, CALM2 or CALM3); interaction takes place in the cytoplasmic region and regulates phosphorylation and proteolytic cleavage. It depends on Zn(2+) as a cofactor. Requires chloride as cofactor. In terms of processing, produced following proteolytic cleavage by secretase enzymes that cleave the transmembrane form in the juxtamembrane stalk region upstream of the transmembrane region. Cleavage can take place at different sites of the juxtamembrane stalk region. Post-translationally, phosphorylated by CK2 on Ser-1297; which allows membrane retention. Phosphorylated on tyrosine residues on its extracellular part, promoting cleavage by secretase enzymes and formation of the soluble form (Angiotensin-converting enzyme, soluble form).

Its subcellular location is the cell membrane. The protein localises to the cytoplasm. It is found in the secreted. It catalyses the reaction Release of a C-terminal dipeptide, oligopeptide-|-Xaa-Yaa, when Xaa is not Pro, and Yaa is neither Asp nor Glu. Thus, conversion of angiotensin I to angiotensin II, with increase in vasoconstrictor activity, but no action on angiotensin II.. The enzyme catalyses angiotensin I + H2O = L-histidyl-L-leucine + angiotensin II. The catalysed reaction is bradykinin + H2O = L-Phe-L-Arg + bradykinin(1-7). It carries out the reaction substance P + H2O = substance P(1-9) + L-Leu-L-Met-NH2. It catalyses the reaction substance P + H2O = substance P(1-8) + Gly-L-Leu-L-Met-NH2. The enzyme catalyses substance P + H2O = L-Phe-L-Phe-Gly-L-Leu-L-Met-NH2 + substance P(1-6). The catalysed reaction is neurotensin + H2O = neurotensin(1-11) + L-isoleucyl-L-leucine. It carries out the reaction goralatide + H2O = N-acetyl-L-seryl-L-aspartate + L-lysyl-L-proline. It catalyses the reaction Met-enkephalin + H2O = L-phenylalanyl-L-methionine + L-tyrosylglycylglycine. The enzyme catalyses Leu-enkephalin + H2O = L-tyrosylglycylglycine + L-phenylalanyl-L-leucine. The catalysed reaction is Met-enkephalin-Arg-Phe + H2O = L-arginyl-L-phenylalanine + Met-enkephalin. The dipeptidyl carboxypeptidase activity is strongly activated by chloride. The dipeptidyl carboxypeptidase activity is specifically inhibited by lisinopril, captopril and enalaprilat. With respect to regulation, strongly inhibited by lisinopril and captopril. Functionally, dipeptidyl carboxypeptidase that removes dipeptides from the C-terminus of a variety of circulating hormones, such as angiotensin I, bradykinin or enkephalins, thereby playing a key role in the regulation of blood pressure, electrolyte homeostasis or synaptic plasticity. Composed of two similar catalytic domains, each possessing a functional active site, with different selectivity for substrates. Plays a major role in the angiotensin-renin system that regulates blood pressure and sodium retention by the kidney by converting angiotensin I to angiotensin II, resulting in an increase of the vasoconstrictor activity of angiotensin. Also able to inactivate bradykinin, a potent vasodilator, and therefore enhance the blood pressure response. Acts as a regulator of synaptic transmission by mediating cleavage of neuropeptide hormones, such as substance P, neurotensin or enkephalins. Catalyzes degradation of different enkephalin neuropeptides (Met-enkephalin, Leu-enkephalin, Met-enkephalin-Arg-Phe and possibly Met-enkephalin-Arg-Gly-Leu). Acts as a regulator of synaptic plasticity in the nucleus accumbens of the brain by mediating cleavage of Met-enkephalin-Arg-Phe, a strong ligand of Mu-type opioid receptor OPRM1, into Met-enkephalin. Met-enkephalin-Arg-Phe cleavage by ACE decreases activation of OPRM1, leading to long-term synaptic potentiation of glutamate release. Also acts as a regulator of hematopoietic stem cell differentiation by mediating degradation of hemoregulatory peptide N-acetyl-SDKP (AcSDKP). Acts as a regulator of cannabinoid signaling pathway by mediating degradation of hemopressin, an antagonist peptide of the cannabinoid receptor CNR1. Involved in amyloid-beta metabolism by catalyzing degradation of Amyloid-beta protein 40 and Amyloid-beta protein 42 peptides, thereby preventing plaque formation. Catalyzes cleavage of cholecystokinin (maturation of Cholecystokinin-8 and Cholecystokinin-5) and Gonadoliberin-1 (both maturation and degradation) hormones. Degradation of hemoregulatory peptide N-acetyl-SDKP (AcSDKP) and amyloid-beta proteins is mediated by the N-terminal catalytic domain, while angiotensin I and cholecystokinin cleavage is mediated by the C-terminal catalytic region. Its function is as follows. Soluble form that is released in blood plasma and other body fluids following proteolytic cleavage in the juxtamembrane stalk region. In terms of biological role, isoform produced by alternative promoter usage that is specifically expressed in spermatocytes and adult testis, and which is required for male fertility. In contrast to somatic isoforms, only contains one catalytic domain. Acts as a dipeptidyl carboxypeptidase that removes dipeptides from the C-terminus of substrates. The identity of substrates that are needed for male fertility is unknown. May also have a glycosidase activity which releases GPI-anchored proteins from the membrane by cleaving the mannose linkage in the GPI moiety. The GPIase activity was reported to be essential for the egg-binding ability of the sperm. This activity is however unclear and has been challenged by other groups, suggesting that it may be indirect. This Pan troglodytes (Chimpanzee) protein is Angiotensin-converting enzyme.